A 126-amino-acid polypeptide reads, in one-letter code: Aspartate 1-decarboxylase (126 aa).

Ser25 serves as the catalytic Schiff-base intermediate with substrate; via pyruvic acid. Position 25 is a pyruvic acid (Ser) (Ser25). Thr57 serves as a coordination point for substrate. The active-site Proton donor is Tyr58. Residue 73-75 participates in substrate binding; sequence GAA.

The protein belongs to the PanD family. In terms of assembly, heterooctamer of four alpha and four beta subunits. Pyruvate serves as cofactor. Is synthesized initially as an inactive proenzyme, which is activated by self-cleavage at a specific serine bond to produce a beta-subunit with a hydroxyl group at its C-terminus and an alpha-subunit with a pyruvoyl group at its N-terminus.

Its subcellular location is the cytoplasm. The enzyme catalyses L-aspartate + H(+) = beta-alanine + CO2. Its pathway is cofactor biosynthesis; (R)-pantothenate biosynthesis; beta-alanine from L-aspartate: step 1/1. Its function is as follows. Catalyzes the pyruvoyl-dependent decarboxylation of aspartate to produce beta-alanine. The polypeptide is Aspartate 1-decarboxylase (Acetivibrio thermocellus (strain ATCC 27405 / DSM 1237 / JCM 9322 / NBRC 103400 / NCIMB 10682 / NRRL B-4536 / VPI 7372) (Clostridium thermocellum)).